We begin with the raw amino-acid sequence, 115 residues long: Large ribosomal subunit protein bL20 (115 aa).

It belongs to the bacterial ribosomal protein bL20 family.

Its function is as follows. Binds directly to 23S ribosomal RNA and is necessary for the in vitro assembly process of the 50S ribosomal subunit. It is not involved in the protein synthesizing functions of that subunit. The protein is Large ribosomal subunit protein bL20 of Prochlorococcus marinus (strain MIT 9312).